We begin with the raw amino-acid sequence, 276 residues long: Putative pyruvate, phosphate dikinase regulatory protein 1 (276 aa).

150–157 lines the ADP pocket; that stretch reads GLPRTSKT.

It belongs to the pyruvate, phosphate/water dikinase regulatory protein family. PDRP subfamily.

It carries out the reaction N(tele)-phospho-L-histidyl/L-threonyl-[pyruvate, phosphate dikinase] + ADP = N(tele)-phospho-L-histidyl/O-phospho-L-threonyl-[pyruvate, phosphate dikinase] + AMP + H(+). The enzyme catalyses N(tele)-phospho-L-histidyl/O-phospho-L-threonyl-[pyruvate, phosphate dikinase] + phosphate + H(+) = N(tele)-phospho-L-histidyl/L-threonyl-[pyruvate, phosphate dikinase] + diphosphate. In terms of biological role, bifunctional serine/threonine kinase and phosphorylase involved in the regulation of the pyruvate, phosphate dikinase (PPDK) by catalyzing its phosphorylation/dephosphorylation. The protein is Putative pyruvate, phosphate dikinase regulatory protein 1 of Syntrophomonas wolfei subsp. wolfei (strain DSM 2245B / Goettingen).